The chain runs to 514 residues: Nucleus accumbens-associated protein 1 (514 aa).

Residues 30 to 94 (CDVSVVVKGH…CYTGRLSMNM (65 aa)) form the BTB domain. Residue lysine 167 forms a Glycyl lysine isopeptide (Lys-Gly) (interchain with G-Cter in SUMO1); alternate linkage. A Glycyl lysine isopeptide (Lys-Gly) (interchain with G-Cter in SUMO2); alternate cross-link involves residue lysine 167. Lysine 182 is covalently cross-linked (Glycyl lysine isopeptide (Lys-Gly) (interchain with G-Cter in SUMO2)). 2 disordered regions span residues 183–218 (RLWDSSQKEAGGSGGNNGSRKMAKFSTPDLAPNRMP) and 241–279 (GPSMSERTSPGTSSAYTSDSPSSYHNEEDEEEDAGEEGT). Position 187 is a phosphoserine (serine 187). Residues 242–251 (PSMSERTSPG) are compositionally biased toward polar residues. Position 245 is a phosphoserine; by PKC (serine 245). Low complexity predominate over residues 252 to 264 (TSSAYTSDSPSSY). The span at 267-279 (EEDEEEDAGEEGT) shows a compositional bias: acidic residues. Residues lysine 304, lysine 438, lysine 466, and lysine 485 each participate in a glycyl lysine isopeptide (Lys-Gly) (interchain with G-Cter in SUMO2) cross-link. Residues 360 to 457 (GTNVYITRAQ…DMCTNARRVV (98 aa)) form the BEN domain. A phosphoserine mark is found at serine 492 and serine 496.

As to quaternary structure, homooligomer; mediated by the BTB domain. Both isoforms interact with HDAC3 and HDAC4. Interacts (via BTB domain) with CUL3, PSMD7 and RCOR1. Phosphorylated by protein kinase C (PKC). Highly expressed in the hippocampus, brain cortex, cerebellum and brainstem. Expressed in the nucleus accumbens, olfactory tubercle, the striatum, frontal and parietal cortex and ventral pallidum. Weakly expressed in the heart, liver, kidney, spleen, testis, and skeletal muscle. Isoform 2 is expressed in the brain and liver, less abundantly expressed in the brain than isoform 1.

Its subcellular location is the nucleus. The protein localises to the cytoplasm. Functionally, functions as a transcriptional repressor. Isoform 1 is a stronger transcriptional repressor than isoform 2. Seems to function as a transcriptional corepressor in neuronal cells through recruitment of HDAC3 and HDAC4. Contributes to tumor progression, and tumor cell proliferation and survival. This may be mediated at least in part through repressing transcriptional activity of GADD45GIP1. Required for recruiting the proteasome from the nucleus to the cytoplasm and dendritic spines. The polypeptide is Nucleus accumbens-associated protein 1 (Nacc1) (Rattus norvegicus (Rat)).